Here is a 501-residue protein sequence, read N- to C-terminus: Cell division control protein 24 (501 aa).

As to quaternary structure, interacts with dna2, pcn1 and rfc1.

It is found in the nucleus. Its subcellular location is the cytoplasm. Its function is as follows. Has a role in the progression of DNA replication and in the maintenance of genomic integrity. Acts during S phase, after initiation, where it is essential for completion. This chain is Cell division control protein 24 (cdc24), found in Schizosaccharomyces pombe (strain 972 / ATCC 24843) (Fission yeast).